Here is a 147-residue protein sequence, read N- to C-terminus: Ribonuclease P protein component (147 aa).

The segment at 117-147 is disordered; the sequence is TRPRGQSSHRTRASREATSAHTTAVGEQPTQ.

It belongs to the RnpA family. Consists of a catalytic RNA component (M1 or rnpB) and a protein subunit.

It carries out the reaction Endonucleolytic cleavage of RNA, removing 5'-extranucleotides from tRNA precursor.. In terms of biological role, RNaseP catalyzes the removal of the 5'-leader sequence from pre-tRNA to produce the mature 5'-terminus. It can also cleave other RNA substrates such as 4.5S RNA. The protein component plays an auxiliary but essential role in vivo by binding to the 5'-leader sequence and broadening the substrate specificity of the ribozyme. The sequence is that of Ribonuclease P protein component from Thermobifida fusca (strain YX).